Consider the following 156-residue polypeptide: UPF0232 protein BL0636 (156 aa).

Belongs to the UPF0232 family.

In Bifidobacterium longum (strain NCC 2705), this protein is UPF0232 protein BL0636.